Consider the following 265-residue polypeptide: Exosome complex component Rrp4 (265 aa).

One can recognise an S1 motif domain in the interval 65-137; it reads GDNVIGKIVD…EVNNIDLTTK (73 aa). The 59-residue stretch at 147-205 folds into the KH domain; sequence KGGQIVKITPSRVPRVIGRGGSMINMIKKLTMTRIIVGQNGWIWVNGKNEALEKLAIEA. Acidic residues predominate over residues 241–254; the sequence is EIPELEEEPQEETE. The interval 241-265 is disordered; that stretch reads EIPELEEEPQEETEVNNNDGETRRT.

It belongs to the RRP4 family. In terms of assembly, component of the archaeal exosome complex. Forms a trimer of Rrp4 and/or Csl4 subunits. The trimer associates with a hexameric ring-like arrangement composed of 3 Rrp41-Rrp42 heterodimers.

The protein resides in the cytoplasm. Its function is as follows. Non-catalytic component of the exosome, which is a complex involved in RNA degradation. Increases the RNA binding and the efficiency of RNA degradation. Confers strong poly(A) specificity to the exosome. The polypeptide is Exosome complex component Rrp4 (Pyrococcus horikoshii (strain ATCC 700860 / DSM 12428 / JCM 9974 / NBRC 100139 / OT-3)).